The sequence spans 1087 residues: Gelsolin-related protein of 125 kDa (1087 aa).

The segment at 1–40 is disordered; sequence MEEDNIVDSKEIENNVEDKKEETPSSSPSPSSSLQQQQEE. Positions 7–23 are enriched in basic and acidic residues; the sequence is VDSKEIENNVEDKKEET. Residues 24-40 show a composition bias toward low complexity; the sequence is PSSSPSPSSSLQQQQEE. 4 Gelsolin-like repeats span residues 73 to 146, 183 to 286, 335 to 442, and 465 to 538; these read PFHF…PTFL, FLFK…FSKW, GKLL…FGTE, and TQLF…DNFW. A coiled-coil region spans residues 550-598; the sequence is INTFINENKEEKEKEEEEKEEEEEEEEEEEEEEEEEKDNNKTTTIIKHL. Residues 555-592 are disordered; that stretch reads NENKEEKEKEEEEKEEEEEEEEEEEEEEEEEKDNNKTT. Residues 562–586 are compositionally biased toward acidic residues; it reads EKEEEEKEEEEEEEEEEEEEEEEEK. Residues 614 to 692 form a Gelsolin-like 5 repeat; it reads IFKADQINPF…EQYNESPLFK (79 aa). A coiled-coil region spans residues 710-912; that stretch reads IISYKQKLAE…ETVNEENEVG (203 aa). Composition is skewed to basic and acidic residues over residues 732–770, 779–808, 817–840, and 849–900; these read KQQQEQEQEQQQKENNKIVEEVKEEVKEEDVKEEVKEEE, EEVKEVAKEETKEEIKEEVNDEATEVKEVN, EEVKEEVKVEVKEEEVKGEAKEEE, and EEVK…KVNE. The tract at residues 732 to 1087 is disordered; the sequence is KQQQEQEQEQ…HNRSSSLTHA (356 aa). Residues 901–910 are compositionally biased toward acidic residues; sequence ENETVNEENE. 2 stretches are compositionally biased toward polar residues: residues 925–939 and 950–961; these read ANSSSTISSPENEGS and EPITPSVVSSSG. Residues 983–1002 are compositionally biased toward basic residues; sequence QGRKGGRKSHGKNQPQHKKN. A compositionally biased stretch (polar residues) spans 1018-1040; that stretch reads KSLNLDIDNQSFDLNSINNNNSV. Low complexity predominate over residues 1047–1065; it reads SSPLSFSSSSINSNSTHNT. A compositionally biased stretch (basic residues) spans 1066–1080; the sequence is PSKKNKNKNKKKHNR.

This sequence belongs to the villin/gelsolin family. In terms of assembly, interacts with rasD and abpC.

The protein localises to the cytoplasmic vesicle. Involved in phototaxis. Required for coupling photodetection to the locomotory machinery of slugs. May be essential in the natural environment for the propagation of spores. The polypeptide is Gelsolin-related protein of 125 kDa (gnrA) (Dictyostelium discoideum (Social amoeba)).